A 474-amino-acid polypeptide reads, in one-letter code: Bifunctional protein HldE (474 aa).

The segment at 1–318 is ribokinase; sequence MKMTLPDFHC…ENAIRGRAET (318 aa). 195 to 198 serves as a coordination point for ATP; that stretch reads NLSE. Residue aspartate 264 is part of the active site. Residues 344 to 474 are cytidylyltransferase; that stretch reads MTNGCFDILH…TNIIKAIKNQ (131 aa).

In the N-terminal section; belongs to the carbohydrate kinase PfkB family. It in the C-terminal section; belongs to the cytidylyltransferase family. As to quaternary structure, homodimer.

The catalysed reaction is D-glycero-beta-D-manno-heptose 7-phosphate + ATP = D-glycero-beta-D-manno-heptose 1,7-bisphosphate + ADP + H(+). It carries out the reaction D-glycero-beta-D-manno-heptose 1-phosphate + ATP + H(+) = ADP-D-glycero-beta-D-manno-heptose + diphosphate. It functions in the pathway nucleotide-sugar biosynthesis; ADP-L-glycero-beta-D-manno-heptose biosynthesis; ADP-L-glycero-beta-D-manno-heptose from D-glycero-beta-D-manno-heptose 7-phosphate: step 1/4. Its pathway is nucleotide-sugar biosynthesis; ADP-L-glycero-beta-D-manno-heptose biosynthesis; ADP-L-glycero-beta-D-manno-heptose from D-glycero-beta-D-manno-heptose 7-phosphate: step 3/4. The protein operates within bacterial outer membrane biogenesis; LPS core biosynthesis. Functionally, catalyzes the phosphorylation of D-glycero-D-manno-heptose 7-phosphate at the C-1 position to selectively form D-glycero-beta-D-manno-heptose-1,7-bisphosphate. In terms of biological role, catalyzes the ADP transfer from ATP to D-glycero-beta-D-manno-heptose 1-phosphate, yielding ADP-D-glycero-beta-D-manno-heptose. The protein is Bifunctional protein HldE of Photorhabdus laumondii subsp. laumondii (strain DSM 15139 / CIP 105565 / TT01) (Photorhabdus luminescens subsp. laumondii).